Reading from the N-terminus, the 78-residue chain is Probable [Fe-S]-dependent transcriptional repressor (78 aa).

Iron-sulfur cluster contacts are provided by cysteine 56, cysteine 61, cysteine 64, and cysteine 70.

It belongs to the FeoC family.

Its function is as follows. May function as a transcriptional regulator that controls feoABC expression. In Escherichia fergusonii (strain ATCC 35469 / DSM 13698 / CCUG 18766 / IAM 14443 / JCM 21226 / LMG 7866 / NBRC 102419 / NCTC 12128 / CDC 0568-73), this protein is Probable [Fe-S]-dependent transcriptional repressor.